We begin with the raw amino-acid sequence, 316 residues long: MPLTTPTAIFLMGPTASGKTDLAIQLRQTLPVEVISVDSALIYRGMDIGTAKPSAEELALAPHRLIDICDPAESYSAANFRQDALREMADIIAAGKIPLLVGGTMLYYKALLEGLSPLPSADEKVRSEIEEKAQLQGWAALHQELAKIDPLAAQRINPNDSQRINRALEVFYLTGKSLSELSQQKGDSLPYQILQFAIAPKDRSILHDRIALRFQKMIEQGFQQEVEKLYQREDLHLDLPAMRCVGYRQMWEYLRGDYDHDEMIFRGICATRQLAKRQITWLRGWKYPIEWLDSLAIESAKQTIIHAVTKISHSNS.

13-20 (GPTASGKT) lines the ATP pocket. 15-20 (TASGKT) is a substrate binding site. Interaction with substrate tRNA stretches follow at residues 38-41 (DSAL), 162-166 (QRINR), 243-248 (RCVGYR), and 276-283 (KRQITWLR).

The protein belongs to the IPP transferase family. In terms of assembly, monomer. Mg(2+) serves as cofactor.

The catalysed reaction is adenosine(37) in tRNA + dimethylallyl diphosphate = N(6)-dimethylallyladenosine(37) in tRNA + diphosphate. Functionally, catalyzes the transfer of a dimethylallyl group onto the adenine at position 37 in tRNAs that read codons beginning with uridine, leading to the formation of N6-(dimethylallyl)adenosine (i(6)A). In Pasteurella multocida (strain Pm70), this protein is tRNA dimethylallyltransferase.